Consider the following 296-residue polypeptide: Fructose-bisphosphate aldolase class 1 (296 aa).

Glu-175 functions as the Proton acceptor in the catalytic mechanism. Lys-212 acts as the Schiff-base intermediate with dihydroxyacetone-P in catalysis.

It belongs to the class I fructose-bisphosphate aldolase family.

It carries out the reaction beta-D-fructose 1,6-bisphosphate = D-glyceraldehyde 3-phosphate + dihydroxyacetone phosphate. Its pathway is carbohydrate degradation; glycolysis; D-glyceraldehyde 3-phosphate and glycerone phosphate from D-glucose: step 4/4. In Staphylococcus aureus (strain Mu3 / ATCC 700698), this protein is Fructose-bisphosphate aldolase class 1.